We begin with the raw amino-acid sequence, 978 residues long: LRR receptor-like serine/threonine-protein kinase ER1 (978 aa).

A signal peptide spans 1 to 24 (MTPAPAAASYRALVALLLVAVAVA). Topologically, residues 25–577 (DDGSTLLEIK…GHQQKPLISK (553 aa)) are extracellular. 2 N-linked (GlcNAc...) asparagine glycosylation sites follow: N62 and N71. LRR repeat units follow at residues 66–87 (AVAA…AVGR), 88–112 (LKGI…IGDC), 114–136 (SLKT…VSKL), 137–159 (KHIE…TLSQ), 160–184 (LPNL…IYWN), 186–208 (VLQY…ICQL), 209–232 (TGLW…IGNC), 233–257 (TSFQ…GFLQ), 259–278 (ATLS…VIGL), 279–302 (MQAL…ILGN), 304–327 (TYTE…LGNM), 328–350 (STLH…EFGK), 352–375 (TGLF…ISSC), 377–399 (NLNS…LHKL), 400–423 (ESMT…LSRI), 424–447 (NNLD…IGSL), 449–470 (HLLR…EIGN), 471–494 (LRSI…ELGM), 496–518 (QNLM…LMNC), and 519–543 (FSLN…NFSR). N-linked (GlcNAc...) asparagine glycosylation is found at N218 and N231. Residues N302 and N326 are each glycosylated (N-linked (GlcNAc...) asparagine). 3 N-linked (GlcNAc...) asparagine glycosylation sites follow: N371, N389, and N406. N454 carries an N-linked (GlcNAc...) asparagine glycan. N-linked (GlcNAc...) asparagine glycans are attached at residues N507, N525, and N540. Residues 578–598 (AAILGIAVGGLVILLMILVAV) form a helical membrane-spanning segment. Topologically, residues 599 to 978 (CRPHSPPVFK…FGEVISQNTE (380 aa)) are cytoplasmic. Residues 645 to 916 (LSEKYIIGYG…EVVRVLDCLV (272 aa)) enclose the Protein kinase domain. ATP is bound by residues 651–659 (IGYGASSTV) and K673. Catalysis depends on D771, which acts as the Proton acceptor.

Belongs to the protein kinase superfamily. Ser/Thr protein kinase family.

The protein localises to the cell membrane. The catalysed reaction is L-seryl-[protein] + ATP = O-phospho-L-seryl-[protein] + ADP + H(+). It catalyses the reaction L-threonyl-[protein] + ATP = O-phospho-L-threonyl-[protein] + ADP + H(+). Receptor kinase involved in the regulation of thermotolerance. Functions as a positive regulator of heat tolerance. May be involved in the regulation of cell proliferation and cell growth. This Oryza sativa subsp. japonica (Rice) protein is LRR receptor-like serine/threonine-protein kinase ER1.